The chain runs to 508 residues: Glycerol kinase (508 aa).

Position 14 (Thr14) interacts with ADP. 3 residues coordinate ATP: Thr14, Thr15, and Ser16. Thr14 lines the sn-glycerol 3-phosphate pocket. Arg18 provides a ligand contact to ADP. Sn-glycerol 3-phosphate contacts are provided by Arg84, Glu85, and Tyr136. Positions 84, 85, and 136 each coordinate glycerol. His232 is subject to Phosphohistidine; by HPr. Asp246 contacts sn-glycerol 3-phosphate. Glycerol is bound by residues Asp246 and Gln247. Residues Thr268 and Gly311 each contribute to the ADP site. ATP-binding residues include Thr268, Gly311, Gln315, and Gly412. Positions 412 and 416 each coordinate ADP.

The protein belongs to the FGGY kinase family. As to quaternary structure, homotetramer and homodimer (in equilibrium). The phosphoenolpyruvate-dependent sugar phosphotransferase system (PTS), including enzyme I, and histidine-containing protein (HPr) are required for the phosphorylation, which leads to the activation of the enzyme.

The catalysed reaction is glycerol + ATP = sn-glycerol 3-phosphate + ADP + H(+). It functions in the pathway polyol metabolism; glycerol degradation via glycerol kinase pathway; sn-glycerol 3-phosphate from glycerol: step 1/1. Activated by phosphorylation and inhibited by fructose 1,6-bisphosphate (FBP). In terms of biological role, key enzyme in the regulation of glycerol uptake and metabolism. Catalyzes the phosphorylation of glycerol to yield sn-glycerol 3-phosphate. This Streptococcus pyogenes serotype M18 (strain MGAS8232) protein is Glycerol kinase.